Reading from the N-terminus, the 182-residue chain is Pyruvoyl-dependent arginine decarboxylase (182 aa).

S44 carries the pyruvic acid (Ser) modification.

Belongs to the PdaD family. Pyruvate serves as cofactor.

It carries out the reaction L-arginine + H(+) = agmatine + CO2. This chain is Pyruvoyl-dependent arginine decarboxylase, found in Thermoplasma volcanium (strain ATCC 51530 / DSM 4299 / JCM 9571 / NBRC 15438 / GSS1).